A 276-amino-acid polypeptide reads, in one-letter code: 4-hydroxy-3-methylbut-2-enyl diphosphate reductase (276 aa).

Cysteine 12 contacts [4Fe-4S] cluster. Positions 36 and 71 each coordinate (2E)-4-hydroxy-3-methylbut-2-enyl diphosphate. Dimethylallyl diphosphate contacts are provided by histidine 36 and histidine 71. Histidine 36 and histidine 71 together coordinate isopentenyl diphosphate. Cysteine 93 provides a ligand contact to [4Fe-4S] cluster. Histidine 121 lines the (2E)-4-hydroxy-3-methylbut-2-enyl diphosphate pocket. Histidine 121 is a dimethylallyl diphosphate binding site. An isopentenyl diphosphate-binding site is contributed by histidine 121. Glutamate 123 acts as the Proton donor in catalysis. Threonine 160 contributes to the (2E)-4-hydroxy-3-methylbut-2-enyl diphosphate binding site. Cysteine 188 serves as a coordination point for [4Fe-4S] cluster. Residues serine 216, serine 217, asparagine 218, and serine 259 each contribute to the (2E)-4-hydroxy-3-methylbut-2-enyl diphosphate site. Serine 216, serine 217, asparagine 218, and serine 259 together coordinate dimethylallyl diphosphate. Positions 216, 217, 218, and 259 each coordinate isopentenyl diphosphate.

Belongs to the IspH family. Requires [4Fe-4S] cluster as cofactor.

The enzyme catalyses isopentenyl diphosphate + 2 oxidized [2Fe-2S]-[ferredoxin] + H2O = (2E)-4-hydroxy-3-methylbut-2-enyl diphosphate + 2 reduced [2Fe-2S]-[ferredoxin] + 2 H(+). The catalysed reaction is dimethylallyl diphosphate + 2 oxidized [2Fe-2S]-[ferredoxin] + H2O = (2E)-4-hydroxy-3-methylbut-2-enyl diphosphate + 2 reduced [2Fe-2S]-[ferredoxin] + 2 H(+). Its pathway is isoprenoid biosynthesis; dimethylallyl diphosphate biosynthesis; dimethylallyl diphosphate from (2E)-4-hydroxy-3-methylbutenyl diphosphate: step 1/1. It functions in the pathway isoprenoid biosynthesis; isopentenyl diphosphate biosynthesis via DXP pathway; isopentenyl diphosphate from 1-deoxy-D-xylulose 5-phosphate: step 6/6. Catalyzes the conversion of 1-hydroxy-2-methyl-2-(E)-butenyl 4-diphosphate (HMBPP) into a mixture of isopentenyl diphosphate (IPP) and dimethylallyl diphosphate (DMAPP). Acts in the terminal step of the DOXP/MEP pathway for isoprenoid precursor biosynthesis. The sequence is that of 4-hydroxy-3-methylbut-2-enyl diphosphate reductase from Nautilia profundicola (strain ATCC BAA-1463 / DSM 18972 / AmH).